The chain runs to 338 residues: Tetraacyldisaccharide 4'-kinase (338 aa).

Residue 61-68 (TLGGTGKT) coordinates ATP.

Belongs to the LpxK family.

The catalysed reaction is a lipid A disaccharide + ATP = a lipid IVA + ADP + H(+). It participates in glycolipid biosynthesis; lipid IV(A) biosynthesis; lipid IV(A) from (3R)-3-hydroxytetradecanoyl-[acyl-carrier-protein] and UDP-N-acetyl-alpha-D-glucosamine: step 6/6. Transfers the gamma-phosphate of ATP to the 4'-position of a tetraacyldisaccharide 1-phosphate intermediate (termed DS-1-P) to form tetraacyldisaccharide 1,4'-bis-phosphate (lipid IVA). The chain is Tetraacyldisaccharide 4'-kinase from Nitrosococcus oceani (strain ATCC 19707 / BCRC 17464 / JCM 30415 / NCIMB 11848 / C-107).